A 109-amino-acid polypeptide reads, in one-letter code: Ig kappa chain V region 3374 (109 aa).

Positions 1 to 24 are framework-1; it reads ADIVMTQTPASVSAAVGGTVTINC. Residues 25-35 form a complementarity-determining-1 region; that stretch reads QASQNIDSWLA. The segment at 36-50 is framework-2; the sequence is WYQQKPGQPPKVLIY. Residues 51-57 form a complementarity-determining-2 region; that stretch reads RTSTLAS. The tract at residues 58–89 is framework-3; it reads GVPSRFKGSRSGTEFTLTISDLECADAATYYC. The tract at residues 90–98 is complementarity-determining-3; it reads QSYYSISSA. The interval 99-108 is framework-4; that stretch reads FGGGTEVVVK.

The polypeptide is Ig kappa chain V region 3374 (Oryctolagus cuniculus (Rabbit)).